A 173-amino-acid polypeptide reads, in one-letter code: NADH-ubiquinone oxidoreductase chain 6 (173 aa).

Helical transmembrane passes span 1–21, 27–47, 48–68, 87–107, and 139–159; these read MTYFVLFLGLCFVLGGLAVAS, YGVVGLVLASVAGCGWLLSLG, VSFVSLVLFMVYLGGMLVVFV, VVGYGVGFVVVLVVGLVVGGF, and CGVGMFLVAGWGLLLTLFVVL.

This sequence belongs to the complex I subunit 6 family.

It is found in the mitochondrion membrane. It catalyses the reaction a ubiquinone + NADH + 5 H(+)(in) = a ubiquinol + NAD(+) + 4 H(+)(out). Core subunit of the mitochondrial membrane respiratory chain NADH dehydrogenase (Complex I) that is believed to belong to the minimal assembly required for catalysis. Complex I functions in the transfer of electrons from NADH to the respiratory chain. The immediate electron acceptor for the enzyme is believed to be ubiquinone. This chain is NADH-ubiquinone oxidoreductase chain 6 (MT-ND6), found in Aethia pygmaea (Whiskered auklet).